The following is a 766-amino-acid chain: BMP/retinoic acid-inducible neural-specific protein 3 (766 aa).

The first 33 residues, 1-33, serve as a signal peptide directing secretion; the sequence is MIWRSRAGAELFSLMALWEWIALSLHCWVLAVA. In terms of domain architecture, MACPF spans 74-264; that stretch reads RYKIYREFGR…FVQAALSYIA (191 aa). N-linked (GlcNAc...) asparagine glycosylation is found at Asn-168, Asn-337, Asn-456, Asn-562, Asn-609, and Asn-641.

Belongs to the BRINP family. In terms of tissue distribution, strongly expressed in oral keratinocytes compared to the weak expression in tongue squamous cell carcinoma (SCC). Expressed in endothelial and aortic smooth muscle cells. Overexpressed in gonadotropinomas compared to normal pituitarie tissues.

Its subcellular location is the secreted. It localises to the mitochondrion. Functionally, inhibits neuronal cell proliferation by negative regulation of the cell cycle transition. Promotes pituitary gonadotrope cell proliferation, migration and invasion, when overexpressed. May play a role in cell pituitary tumor development. The chain is BMP/retinoic acid-inducible neural-specific protein 3 (BRINP3) from Homo sapiens (Human).